Here is a 192-residue protein sequence, read N- to C-terminus: Adenylate kinase (192 aa).

10–18 lines the ATP pocket; sequence GVPGVGGTT.

This sequence belongs to the archaeal adenylate kinase family. In terms of assembly, monomer.

Its subcellular location is the cytoplasm. The enzyme catalyses AMP + ATP = 2 ADP. In Methanothermococcus thermolithotrophicus (Methanococcus thermolithotrophicus), this protein is Adenylate kinase (adkA).